Here is a 315-residue protein sequence, read N- to C-terminus: Probable carboxylesterase 3 (315 aa).

Met-1 bears the N-acetylmethionine mark. An Involved in the stabilization of the negatively charged intermediate by the formation of the oxyanion hole motif is present at residues 81-83 (HGG). Catalysis depends on residues Ser-160, Asp-258, and His-290.

The protein belongs to the 'GDXG' lipolytic enzyme family. In terms of tissue distribution, expressed in flowers and siliques.

The catalysed reaction is a carboxylic ester + H2O = an alcohol + a carboxylate + H(+). Functionally, carboxylesterase acting on esters with varying acyl chain length. This chain is Probable carboxylesterase 3 (CXE3), found in Arabidopsis thaliana (Mouse-ear cress).